The sequence spans 154 residues: Fucose mutarotase (154 aa).

Residue His24 is the Proton donor of the active site. Asp32 provides a ligand contact to substrate. The active site involves Asp69. Substrate contacts are provided by Met79, Tyr120, Tyr138, and Asn140. Tyr120 is a catalytic residue.

Belongs to the RbsD / FucU family. As to quaternary structure, mainly homodimer, but also exists as homotetramer, homooctamer, and homodecamer. The homodimeric form seems catalytically inactive.

The enzyme catalyses alpha-L-fucose = beta-L-fucose. Its pathway is carbohydrate metabolism; L-fucose metabolism. In terms of biological role, involved in the interconversion between alpha- and beta-L-fucoses. L-Fucose (6-deoxy-L-galactose) exists as alpha-L-fucose (29.5%) and beta-L-fucose (70.5%), the beta-form is metabolized through the salvage pathway. GDP-L-fucose formed either by the de novo or salvage pathways is transported into the endoplasmic reticulum, where it serves as a substrate for N- and O-glycosylations by fucosyltransferases. Fucosylated structures expressed on cell surfaces or secreted in biological fluids are believed to play a critical role in cell-cell adhesion and recognition processes. This Homo sapiens (Human) protein is Fucose mutarotase (FUOM).